Reading from the N-terminus, the 331-residue chain is MKQTVYTASPESQQIHVWSLNHEGTLTLVQVVDVPGQVQPMVVSPDKRYLYVGVRPEFRVLAYRIAPDDGALTFAAESALPGSPTHISTDHHGRFVFVGSYNAGNVSVTRLQDGLPVELVDVVEGLDGCHSANITPDNRTLWVPALKQDRICLFTLSDDGHLVAQEPAEVNTVEGAGPRHMVFHPNRQYAYCVNELNSSVDVWQLKNPHGEIECVQTLDMMPADFSDTRWAADIHITPDGRHLYACDRTASLITVFSVSEDGSVLSVEGFQPTEAQPRGFNIDNSGKYLIAAGQKSHHIAVYEITGTQGLLTEKGRYAVGQGPMWVVVNAY.

Belongs to the cycloisomerase 2 family.

It catalyses the reaction 6-phospho-D-glucono-1,5-lactone + H2O = 6-phospho-D-gluconate + H(+). It functions in the pathway carbohydrate degradation; pentose phosphate pathway; D-ribulose 5-phosphate from D-glucose 6-phosphate (oxidative stage): step 2/3. Its function is as follows. Catalyzes the hydrolysis of 6-phosphogluconolactone to 6-phosphogluconate. This chain is 6-phosphogluconolactonase, found in Salmonella agona (strain SL483).